A 320-amino-acid polypeptide reads, in one-letter code: Nucleotide-binding protein Pcryo_0127 (320 aa).

An ATP-binding site is contributed by 32–39 (GRSGSGKT). 82–85 (DIRT) is a GTP binding site.

This sequence belongs to the RapZ-like family.

Displays ATPase and GTPase activities. The polypeptide is Nucleotide-binding protein Pcryo_0127 (Psychrobacter cryohalolentis (strain ATCC BAA-1226 / DSM 17306 / VKM B-2378 / K5)).